The primary structure comprises 448 residues: Noelin-2 (448 aa).

The N-terminal stretch at 1–14 is a signal peptide; the sequence is MRKLRQTGTTIAGG. Coiled coils occupy residues 52-79 and 130-187; these read RDGR…LELR and LEQY…AQKL. Residues Asn-68, Asn-149, Asn-269, Asn-304, Asn-393, and Asn-435 are each glycosylated (N-linked (GlcNAc...) asparagine). Positions 188-440 constitute an Olfactomedin-like domain; it reads GCGKLTGVSN…QVLYNVTLFH (253 aa). Residues Cys-189 and Cys-371 are joined by a disulfide bond.

As to quaternary structure, peripherally associated with AMPAR complex. AMPAR complex consists of an inner core made of 4 pore-forming GluA/GRIA proteins (GRIA1, GRIA2, GRIA3 and GRIA4) and 4 major auxiliary subunits arranged in a twofold symmetry. One of the two pairs of distinct binding sites is occupied either by CNIH2, CNIH3 or CACNG2, CACNG3. The other harbors CACNG2, CACNG3, CACNG4, CACNG8 or GSG1L. This inner core of AMPAR complex is complemented by outer core constituents binding directly to the GluA/GRIA proteins at sites distinct from the interaction sites of the inner core constituents. Outer core constituents include at least PRRT1, PRRT2, CKAMP44/SHISA9, FRRS1L and NRN1. The proteins of the inner and outer core serve as a platform for other, more peripherally associated AMPAR constituents, including OLFM2. Alone or in combination, these auxiliary subunits control the gating and pharmacology of the AMPAR complex and profoundly impact their biogenesis and protein processing. Interacts with GRIA2. Interacts with OLFM1 and OLFM3. Interacts with SRF; the interaction promotes dissociation of SRF from the transcriptional repressor HEY2. Interacts with RUNX2. In terms of tissue distribution, expressed in the brain (at protein level). In the developing eye, first detected at 12 dpc in the retinal pigmented epithelium and preferentially expressed in differentiating retinal ganglion cells between 15 and 18 dpc. In the brain, expression is detected mainly in the olfactory bulb, cortex, piriform cortex, olfactory trabeculae, and inferior and superior colliculus. In the adult eye, expression is detected mainly in retinal ganglion cells. Expressed in carotid arteries.

The protein localises to the secreted. The protein resides in the synapse. Its subcellular location is the membrane. It localises to the nucleus. It is found in the cytoplasm. In terms of biological role, involved in transforming growth factor beta (TGF-beta)-induced smooth muscle differentiation. TGF-beta induces expression and nuclear translocation of OLFM2 where it binds to SRF, causing its dissociation from the transcriptional repressor HEY2/HERP1 and facilitating binding of SRF to target genes. Plays a role in AMPAR complex organization. Is a regulator of vascular smooth-muscle cell (SMC) phenotypic switching, that acts by promoting RUNX2 and inhibiting MYOCD binding to SRF. SMC phenotypic switching is the process through which vascular SMCs undergo transition between a quiescent contractile phenotype and a proliferative synthetic phenotype in response to pathological stimuli. SMC phenotypic plasticity is essential for vascular development and remodeling. The polypeptide is Noelin-2 (Olfm2) (Mus musculus (Mouse)).